Reading from the N-terminus, the 606-residue chain is KH domain-containing protein At4g18375 (606 aa).

Positions 1–10 (MVERKKRKQI) are enriched in basic residues. The interval 1 to 26 (MVERKKRKQIQRNNSESNRNQKRRIS) is disordered. 5 KH domains span residues 35–99 (LVVY…IGFT), 138–210 (NKEC…LFAV), 311–380 (ELVF…VEAV), 394–455 (NVKM…LIQI), and 535–599 (SSAL…ENLV).

The protein localises to the nucleus. The polypeptide is KH domain-containing protein At4g18375 (Arabidopsis thaliana (Mouse-ear cress)).